Reading from the N-terminus, the 228-residue chain is Phosphoglycolate phosphatase (228 aa).

Catalysis depends on Asp-12, which acts as the Nucleophile. Mg(2+)-binding residues include Asp-12, Asp-14, and Asp-177.

This sequence belongs to the HAD-like hydrolase superfamily. CbbY/CbbZ/Gph/YieH family. It depends on Mg(2+) as a cofactor.

The enzyme catalyses 2-phosphoglycolate + H2O = glycolate + phosphate. It participates in organic acid metabolism; glycolate biosynthesis; glycolate from 2-phosphoglycolate: step 1/1. In terms of biological role, specifically catalyzes the dephosphorylation of 2-phosphoglycolate. Is involved in the dissimilation of the intracellular 2-phosphoglycolate formed during the DNA repair of 3'-phosphoglycolate ends, a major class of DNA lesions induced by oxidative stress. This Vibrio vulnificus (strain CMCP6) protein is Phosphoglycolate phosphatase.